Reading from the N-terminus, the 1163-residue chain is Leptin receptor (1163 aa).

Positions 1–21 (MICQKFCVVLLHWEFICVITA) are cleaved as a signal peptide. Residues 22–837 (FNLSYPITPW…QDNTEKHQND (816 aa)) lie on the Extracellular side of the membrane. 7 N-linked (GlcNAc...) asparagine glycosylation sites follow: asparagine 23, asparagine 41, asparagine 56, asparagine 71, asparagine 79, asparagine 96, and asparagine 114. 2 cysteine pairs are disulfide-bonded: cysteine 37/cysteine 88 and cysteine 87/cysteine 97. Disulfide bonds link cysteine 129/cysteine 140 and cysteine 184/cysteine 194. Residues asparagine 185, asparagine 204, asparagine 274, asparagine 345, and asparagine 395 are each glycosylated (N-linked (GlcNAc...) asparagine). Residues 237 to 331 (PPLGLRMEIT…TPHVFTTQDV (95 aa)) form the Fibronectin type-III 1 domain. 2 cysteine pairs are disulfide-bonded: cysteine 350/cysteine 410 and cysteine 411/cysteine 416. N-linked (GlcNAc...) asparagine glycosylation occurs at asparagine 431. 3 cysteine pairs are disulfide-bonded: cysteine 434–cysteine 445, cysteine 471–cysteine 526, and cysteine 486–cysteine 496. Residues 465–482 (RRSSLYCFDIPSIHPISK) form a leptin-binding region. 3 Fibronectin type-III domains span residues 537–632 (PPSS…TVVM), 637–730 (PMRG…LTFS), and 738–831 (IVQS…QDNT). The short motif at 620–624 (WSNWS) is the WSXWS motif element. Asparagine 622, asparagine 657, asparagine 668, asparagine 686, asparagine 695, asparagine 726, and asparagine 748 each carry an N-linked (GlcNAc...) asparagine glycan. The chain crosses the membrane as a helical span at residues 838 to 860 (AGLYVIVPVIISSSILLLGTLLI). Residues 861-1163 (LHQRMKKLFW…MENKMCDLTV (303 aa)) lie on the Cytoplasmic side of the membrane. Positions 869 to 877 (FWEDVPNPK) match the Box 1 motif motif. At serine 880 the chain carries Phosphoserine. The required for JAK2 activation stretch occupies residues 891 to 896 (ETFEHL). Positions 896-904 (LFIKHTASV) are required for STAT3 phosphorylation. Tyrosine 984 is modified (phosphotyrosine; by JAK2). The residue at position 1077 (tyrosine 1077) is a Phosphotyrosine. Tyrosine 1139 carries the phosphotyrosine; by JAK2 modification.

This sequence belongs to the type I cytokine receptor family. Type 2 subfamily. Present as a mixture of monomers and dimers. The phosphorylated receptor binds a number of SH2 domain-containing proteins such as JAK2, STAT3, PTPN11, and SOCS3. Interaction with SOCS3 inhibits JAK/STAT signaling and MAPK cascade. On ligand binding, phosphorylated on two conserved C-terminal tyrosine residues (isoform B only) by JAK2. Tyr-984 is required for complete binding and activation of PTPN11, ERK/FOS activation and, for interaction with SOCS3. Phosphorylation on Tyr-1139 is required for STAT3 binding/activation. Post-translationally, on ligand binding, phosphorylated on two conserved C-terminal tyrosine residues (isoform B only) by JAK2. Tyr-984 is required for complete binding and activation of PTPN11, ERK/FOS activation,for interaction with SOCS3 and SOCS3 mediated inhibition of leptin signaling. Phosphorylation on Tyr-1139 is required for STAT3 binding/activation. Phosphorylation of Tyr-1077 has a more accessory role. Widely expressed. High expression of isoform B in liver, adipose tissue, hypothalamus and choroid plexus.

It localises to the cell membrane. It is found in the basolateral cell membrane. Functionally, receptor for hormone LEP/leptin. On ligand binding, mediates LEP central and peripheral effects through the activation of different signaling pathways such as JAK2/STAT3 and MAPK cascade/FOS. In the hypothalamus, LEP acts as an appetite-regulating factor that induces a decrease in food intake and an increase in energy consumption by inducing anorexinogenic factors and suppressing orexigenic neuropeptides, also regulates bone mass and secretion of hypothalamo-pituitary-adrenal hormones. In the periphery, increases basal metabolism, influences reproductive function, regulates pancreatic beta-cell function and insulin secretion, is pro-angiogenic and affects innate and adaptive immunity. Control of energy homeostasis and melanocortin production (stimulation of POMC and full repression of AgRP transcription) is mediated by STAT3 signaling, whereas distinct signals regulate NPY and the control of fertility, growth and glucose homeostasis. Involved in the regulation of counter-regulatory response to hypoglycemia by inhibiting neurons of the parabrachial nucleus. Has a specific effect on T lymphocyte responses, differentially regulating the proliferation of naive and memory T-cells. Leptin increases Th1 and suppresses Th2 cytokine production. In terms of biological role, may transport LEP across the blood-brain barrier. Binds LEP and mediates LEP endocytosis. Does not induce phosphorylation of and activate STAT3. The chain is Leptin receptor (LEPR) from Macaca mulatta (Rhesus macaque).